Reading from the N-terminus, the 556-residue chain is CDP-diacylglycerol--glycerol-3-phosphate 3-phosphatidyltransferase, mitochondrial (556 aa).

The N-terminal 28 residues, 1–28 (MAVAAAAAAGPVFWRRLLGLLPGRPGLA), are a transit peptide targeting the mitochondrion. Serine 49 carries the post-translational modification Phosphoserine. Residue 124–131 (ASLYLGTG) participates in ATP binding. PLD phosphodiesterase domains follow at residues 215-241 (TIGL…SDSY) and 460-493 (RGWT…GYRS). Residues histidine 220, lysine 222, and aspartate 227 contribute to the active site.

It belongs to the CDP-alcohol phosphatidyltransferase class-II family.

It localises to the mitochondrion. It carries out the reaction a CDP-1,2-diacyl-sn-glycerol + sn-glycerol 3-phosphate = a 1,2-diacyl-sn-glycero-3-phospho-(1'-sn-glycero-3'-phosphate) + CMP + H(+). The protein operates within phospholipid metabolism; phosphatidylglycerol biosynthesis; phosphatidylglycerol from CDP-diacylglycerol: step 1/2. Its activity is regulated as follows. Activated by calcium and magnesium and inhibited by other bivalent cations. Functionally, functions in the biosynthesis of the anionic phospholipids phosphatidylglycerol and cardiolipin. This chain is CDP-diacylglycerol--glycerol-3-phosphate 3-phosphatidyltransferase, mitochondrial (PGS1), found in Homo sapiens (Human).